We begin with the raw amino-acid sequence, 507 residues long: MLNRVRSAVAHLVSSGGTSSQRSKSPDLPNATSAPPAAQETPKSSREKPGNQVGAPQKTAETTVSFSRPTFLQLSPGGLRRADDHAGRAVQSPPDTGRRLPWSTGYAEVINAGKSRHNEDQACCEVVYVESRRSRSVTGVSREPSHNQGFCFYYWGLFDGHAGGGAAEMASRLLHRHIREQLKDLVEILKDPLPPPLCLPSTPGTPGAPSPSQLVSPQSCWSPQKEVTHDSLIVGAIENAFHLMDEQMARERRGHQVEGGCCALVVLYLLGKMYVANAGDSRAIIVRNGEIIPMSREFTPETERQRLQLLGFLKPELLGSEFTHLEFPRRVQPKELGQRMLYRDQNMTGWAYKKIEVEDLRFPLVCGEGKKARVMATIGVTRGLGDHNLKVCSSTLSIKPFLSCFPEVRVYDLTQYEHCPDDVLVLGTDGLWDVTNDSEVAATVDRVLSSYEPNDPSRYTALAQALVLGARGIPRDRGWRLPNNKLGSGDDISVFVIPLGGPGSSYS.

Disordered stretches follow at residues 1–102 (MLNR…RLPW) and 197–220 (LCLPSTPGTPGAPSPSQLVSPQSC). A compositionally biased stretch (low complexity) spans 14–23 (SSGGTSSQRS). Thr41 is subject to Phosphothreonine. Residues 59-73 (TAETTVSFSRPTFLQ) are compositionally biased toward polar residues. Ser65 and Ser75 each carry phosphoserine. The PPM-type phosphatase domain maps to 103–499 (STGYAEVINA…DDISVFVIPL (397 aa)). The span at 199 to 212 (LPSTPGTPGAPSPS) shows a compositional bias: low complexity.

The protein belongs to the PP2C family. As to quaternary structure, interacts with UBE2I/UBC9. In terms of tissue distribution, specifically expressed in the testicular germ cells.

The enzyme catalyses O-phospho-L-seryl-[protein] + H2O = L-seryl-[protein] + phosphate. It carries out the reaction O-phospho-L-threonyl-[protein] + H2O = L-threonyl-[protein] + phosphate. The sequence is that of Protein phosphatase 1J (Ppm1j) from Mus musculus (Mouse).